We begin with the raw amino-acid sequence, 549 residues long: uncharacterized protein (549 aa).

The next 12 membrane-spanning stretches (helical) occupy residues 1–21, 28–48, 50–70, 85–105, 106–126, 165–185, 187–207, 222–242, 278–298, 310–330, 361–381, and 398–418; these read MEIF…GVVT, IPLP…TFGL, VEFD…FADG, IFGL…FLIY, WVVP…LSPT, FAVA…TVEF, KVAI…GRSL, IVLL…IGVS, LEFV…PGIL, NVEI…LMLV, ILIA…VLSI, and VFLA…MLPI.

It belongs to the monovalent cation:proton antiporter 1 (CPA1) transporter (TC 2.A.36) family.

It localises to the cell inner membrane. This is an uncharacterized protein from Escherichia coli (strain K12).